The sequence spans 131 residues: Gem-associated protein 7 (131 aa).

Met1 is subject to N-acetylmethionine. Positions Met1–Gly29 constitute an SUZ-C domain. Position 3 is a phosphothreonine (Thr3). In terms of domain architecture, Sm spans Arg65–Pro131.

This sequence belongs to the gemin-7 family. As to quaternary structure, part of the core SMN complex that contains SMN1, GEMIN2/SIP1, DDX20/GEMIN3, GEMIN4, GEMIN5, GEMIN6, GEMIN7, GEMIN8 and STRAP/UNRIP. Part of the SMN-Sm complex that contains SMN1, GEMIN2/SIP1, DDX20/GEMIN3, GEMIN4, GEMIN5, GEMIN6, GEMIN7, GEMIN8, STRAP/UNRIP and the Sm proteins SNRPB, SNRPD1, SNRPD2, SNRPD3, SNRPE, SNRPF and SNRPG. Interacts with GEMIN6; the interaction is direct. Interacts with STRAP/UNRIP; the interaction is direct. Interacts with GEMIN8; the interaction is direct. Interacts with SNRPB, SNRPD2, SNRPD3 and SNRPE; the interaction is direct.

Its subcellular location is the nucleus. The protein localises to the nucleoplasm. The protein resides in the gem. It localises to the cytoplasm. Its function is as follows. The SMN complex catalyzes the assembly of small nuclear ribonucleoproteins (snRNPs), the building blocks of the spliceosome, and thereby plays an important role in the splicing of cellular pre-mRNAs. Most spliceosomal snRNPs contain a common set of Sm proteins SNRPB, SNRPD1, SNRPD2, SNRPD3, SNRPE, SNRPF and SNRPG that assemble in a heptameric protein ring on the Sm site of the small nuclear RNA to form the core snRNP (Sm core). In the cytosol, the Sm proteins SNRPD1, SNRPD2, SNRPE, SNRPF and SNRPG are trapped in an inactive 6S pICln-Sm complex by the chaperone CLNS1A that controls the assembly of the core snRNP. To assemble core snRNPs, the SMN complex accepts the trapped 5Sm proteins from CLNS1A forming an intermediate. Binding of snRNA inside 5Sm triggers eviction of the SMN complex, thereby allowing binding of SNRPD3 and SNRPB to complete assembly of the core snRNP. The polypeptide is Gem-associated protein 7 (GEMIN7) (Homo sapiens (Human)).